Here is a 206-residue protein sequence, read N- to C-terminus: Small ribosomal subunit protein uS4 (206 aa).

Positions 96 to 158 (SRLDNVVYRM…AKGQLRIKGA (63 aa)) constitute an S4 RNA-binding domain.

The protein belongs to the universal ribosomal protein uS4 family. Part of the 30S ribosomal subunit. Contacts protein S5. The interaction surface between S4 and S5 is involved in control of translational fidelity.

Its function is as follows. One of the primary rRNA binding proteins, it binds directly to 16S rRNA where it nucleates assembly of the body of the 30S subunit. With S5 and S12 plays an important role in translational accuracy. This Coxiella burnetii (strain CbuK_Q154) (Coxiella burnetii (strain Q154)) protein is Small ribosomal subunit protein uS4.